The sequence spans 344 residues: MINEDSIQLDTLLKKYYEHSIEKIVFADDNGKIIAMNDAAKDILSEEDNYSAVANAICHRCEGYTNAYDVQSCKDCFLESMQVQATNFQVFMKTKDQKVMPFTATYQLIDQDRGIHAFTLQNVSSQIEQQEKLHQQHMMRKTISAQENERKRISRELHDSVIQEMLNVDVQLRLLKYQEDTTKLLEDAENIEYIVAKLIDDIRNMSVELRPASLDDLGLEAAFKSYFKQFEENYGIKIIYTSNIKNTRFDSDIETVVYRVVQEAILNALKYADVNEINVGIRQTGRHLVAEVIDAGNGFDPSSKPKGSGLGLYGMNERAELVSGSVNIETKIGEGTNVTLNIPI.

Residues cysteine 58, cysteine 61, cysteine 73, and cysteine 76 each coordinate [4Fe-4S] cluster. Residues 152-344 (RISRELHDSV…GTNVTLNIPI (193 aa)) enclose the Histidine kinase domain. Phosphohistidine; by autocatalysis is present on histidine 158.

It depends on [4Fe-4S] cluster as a cofactor. In terms of processing, autophosphorylated.

It localises to the cytoplasm. It catalyses the reaction ATP + protein L-histidine = ADP + protein N-phospho-L-histidine.. Functionally, member of the two-component regulatory system NreB/NreC involved in the control of dissimilatory nitrate/nitrite reduction in response to oxygen. NreB functions as a direct oxygen sensor histidine kinase which is autophosphorylated, in the absence of oxygen, probably at the conserved histidine residue, and transfers its phosphate group probably to a conserved aspartate residue of NreC. NreB/NreC activates the expression of the nitrate (narGHJI) and nitrite (nir) reductase operons, as well as the putative nitrate transporter gene narT. The chain is Oxygen sensor histidine kinase NreB (nreB) from Staphylococcus aureus (strain Mu3 / ATCC 700698).